Consider the following 348-residue polypeptide: Galactose-1-phosphate uridylyltransferase (348 aa).

28-31 (RAKR) lines the UDP-alpha-D-glucose pocket. Residues Cys52 and Cys55 each contribute to the Zn(2+) site. UDP-alpha-D-glucose is bound by residues Val61 and 77 to 78 (ND). His115 lines the Zn(2+) pocket. Residues Asn153 and 159–161 (GCS) each bind UDP-alpha-D-glucose. His164 provides a ligand contact to Zn(2+). The Tele-UMP-histidine intermediate role is filled by His166. A UDP-alpha-D-glucose-binding site is contributed by Gln168. Positions 182, 281, 296, and 298 each coordinate Fe cation. UDP-alpha-D-glucose-binding positions include 311 to 312 (KF), 316 to 317 (YE), and Gln323.

The protein belongs to the galactose-1-phosphate uridylyltransferase type 1 family. It depends on Zn(2+) as a cofactor.

The catalysed reaction is alpha-D-galactose 1-phosphate + UDP-alpha-D-glucose = alpha-D-glucose 1-phosphate + UDP-alpha-D-galactose. Its pathway is carbohydrate metabolism; galactose metabolism. This is Galactose-1-phosphate uridylyltransferase (galT) from Salmonella typhimurium (strain LT2 / SGSC1412 / ATCC 700720).